A 477-amino-acid chain; its full sequence is SH3 domain-binding protein 5 homolog (477 aa).

The stretch at 12-95 forms a coiled coil; that stretch reads QIQIELENLN…AAVKFQRANE (84 aa). Residues Ser-113 and Ser-115 each carry the phosphoserine modification. The stretch at 122–221 forms a coiled coil; the sequence is NAWQEMLNHA…YSTALRNLER (100 aa). Disordered stretches follow at residues 224–258 and 276–306; these read EDIHRQRGDFPTPPGPREPGVGAELNSPTSSALPS and GSQMSLGAKTPQAAAETEDEEDACDYDETGA. The segment covering 291–305 has biased composition (acidic residues); sequence ETEDEEDACDYDETG.

Belongs to the SH3BP5 family.

In Drosophila melanogaster (Fruit fly), this protein is SH3 domain-binding protein 5 homolog (pcs).